Here is a 516-residue protein sequence, read N- to C-terminus: Cyclic AMP response element-binding protein A (516 aa).

Phosphoserine occurs at positions 75, 79, and 82. 3 disordered regions span residues 213 to 237 (KDEP…SQHQ), 294 to 338 (KSEK…HLFA), and 353 to 408 (PAGG…KGST). Over residues 221-237 (SSCPASPTSQASSSQHQ) the composition is skewed to low complexity. Residues 361 to 392 (RVSRTAASITRSSSGSASASGSSTSSTVTTTR) are compositionally biased toward low complexity. The bZIP domain maps to 441–504 (SLKKIRRKIK…ANLLSQLHKL (64 aa)). The interval 443 to 463 (KKIRRKIKNKISAQESRRKKK) is basic motif. The tract at residues 469–476 (LERRVEIL) is leucine-zipper.

It belongs to the bZIP family. As to quaternary structure, may bind DNA as heterodimers with other bZIP proteins. In terms of tissue distribution, in all cell types examined, including developing salivary gland in embryos and in adults, brain and optic lobe cell bodies, salivary gland, midgut epithelial cells of the cardia, female ovarian columnar follicle cells and male seminal vesicle, ejaculatory duct, and ejaculatory bulb.

The protein resides in the nucleus. Its function is as follows. Transcriptional activator. Binds to fat body-specific enhancers of alcohol dehydrogenase (ADH) and yolk protein genes. BBF-2 may play a role in fat body gene expression. It binds the consensus sequence 5'-T[AC]NACGTAN[TG]C-3'. The protein is Cyclic AMP response element-binding protein A (CrebA) of Drosophila melanogaster (Fruit fly).